A 238-amino-acid polypeptide reads, in one-letter code: Probable 2-phosphosulfolactate phosphatase (238 aa).

It belongs to the ComB family. The cofactor is Mg(2+).

The enzyme catalyses (2R)-O-phospho-3-sulfolactate + H2O = (2R)-3-sulfolactate + phosphate. This chain is Probable 2-phosphosulfolactate phosphatase, found in Clostridium botulinum (strain Alaska E43 / Type E3).